Reading from the N-terminus, the 261-residue chain is Cytochrome c oxidase subunit 3 (261 aa).

Residues 1–15 lie on the Mitochondrial matrix side of the membrane; it reads MTHQTHAYHMVNPSP. Residues 16–34 form a helical membrane-spanning segment; that stretch reads WPLTGALSALLMTSGLIMW. At 35 to 40 the chain is on the mitochondrial intermembrane side; that stretch reads FHFNST. Residues 41–66 traverse the membrane as a helical segment; sequence ILLMLGLTTNMLTMYQWWRDVIREST. Over 67 to 72 the chain is Mitochondrial matrix; the sequence is FQGHHT. The chain crosses the membrane as a helical span at residues 73–105; it reads PNVQKGLRYGMILFIISEVLFFTGFFWAFYHSS. Over 106 to 128 the chain is Mitochondrial intermembrane; that stretch reads LAPTPELGGCWPPTGIHPLNPLE. A helical transmembrane segment spans residues 129-152; sequence VPLLNTSVLLASGVSITWAHHSLM. Over 153–155 the chain is Mitochondrial matrix; that stretch reads EGN. Residues 156 to 183 form a helical membrane-spanning segment; the sequence is RNHMLQALFITIALGVYFTLLQASEYYE. The Mitochondrial intermembrane segment spans residues 184-190; it reads APFTISD. The chain crosses the membrane as a helical span at residues 191–223; the sequence is GVYGSTFFVATGFHGLHVIIGSTFLIVCFFRQL. The Mitochondrial matrix portion of the chain corresponds to 224–232; it reads KFHFTSNHH. Residues 233–256 traverse the membrane as a helical segment; sequence FGFEAAAWYWHFVDVVWLFLYVSI. Topologically, residues 257–261 are mitochondrial intermembrane; that stretch reads YWWGS.

The protein belongs to the cytochrome c oxidase subunit 3 family. In terms of assembly, component of the cytochrome c oxidase (complex IV, CIV), a multisubunit enzyme composed of 14 subunits. The complex is composed of a catalytic core of 3 subunits MT-CO1, MT-CO2 and MT-CO3, encoded in the mitochondrial DNA, and 11 supernumerary subunits COX4I, COX5A, COX5B, COX6A, COX6B, COX6C, COX7A, COX7B, COX7C, COX8 and NDUFA4, which are encoded in the nuclear genome. The complex exists as a monomer or a dimer and forms supercomplexes (SCs) in the inner mitochondrial membrane with NADH-ubiquinone oxidoreductase (complex I, CI) and ubiquinol-cytochrome c oxidoreductase (cytochrome b-c1 complex, complex III, CIII), resulting in different assemblies (supercomplex SCI(1)III(2)IV(1) and megacomplex MCI(2)III(2)IV(2)).

It is found in the mitochondrion inner membrane. It carries out the reaction 4 Fe(II)-[cytochrome c] + O2 + 8 H(+)(in) = 4 Fe(III)-[cytochrome c] + 2 H2O + 4 H(+)(out). Component of the cytochrome c oxidase, the last enzyme in the mitochondrial electron transport chain which drives oxidative phosphorylation. The respiratory chain contains 3 multisubunit complexes succinate dehydrogenase (complex II, CII), ubiquinol-cytochrome c oxidoreductase (cytochrome b-c1 complex, complex III, CIII) and cytochrome c oxidase (complex IV, CIV), that cooperate to transfer electrons derived from NADH and succinate to molecular oxygen, creating an electrochemical gradient over the inner membrane that drives transmembrane transport and the ATP synthase. Cytochrome c oxidase is the component of the respiratory chain that catalyzes the reduction of oxygen to water. Electrons originating from reduced cytochrome c in the intermembrane space (IMS) are transferred via the dinuclear copper A center (CU(A)) of subunit 2 and heme A of subunit 1 to the active site in subunit 1, a binuclear center (BNC) formed by heme A3 and copper B (CU(B)). The BNC reduces molecular oxygen to 2 water molecules using 4 electrons from cytochrome c in the IMS and 4 protons from the mitochondrial matrix. The chain is Cytochrome c oxidase subunit 3 (MT-CO3) from Eudorcas thomsonii (Thomson's gazelle).